A 638-amino-acid polypeptide reads, in one-letter code: MATPVESGTVPCSLEPFDVYLFGRGEHWDIYRVLGAHAHAQDGETGYRFAVWAPNAHAVSLVGPFNDWRSGDFPLFPVGTSGIWAGFVAGMEYGRLYKFAVQGADGTVRLKTDPYALYCEMRPGTASFTWSLDSYAWNDAAWMQRRREAGPPLQQPVSIYELHAGSWMRRHGEGHPFVNWDELAGTLIPYVRDAGFTHIELMPVAEHPLDQSWGYQTGAYYAPTSRFGTPDDLRRFVDLCHQQGIGVILDWVPAHFPKDDWSLGRFDGTALYEHLDPRLGEHPDWGTYVFNYGRHEVRNFLFANALYWFKEFHVDGLRIDAVASMLYLDYSRKEGEWLPNVHGGNENLEAIDFLRELNRVVHEQYPGVMMIAEESTSWPGVSRPLYTGGLGFTFKWNMGWMHDTLNYMRQDPVFRAYQHSSLTFSMLYAFSENFVLPLSHDEVVHGKGALLSKMPGDMWQQQANLRLMYAYMWAHPGKKLLFMGGEIGQWNEWSESREPDWCLREFPAHEGIRNLVRDLNGIYAQEPAMHRHDHDWSGFRWLDFSDYGCSVISFARFAEDSPPVMWVFNFTPVVRRWYRVPCPRAGEWQEVLNTDSGYYGGSNVGNGGGAVACTDNWHGGHFMELTLPPLAAVALKPV.

D320 acts as the Nucleophile in catalysis. The active-site Proton donor is E373.

The protein belongs to the glycosyl hydrolase 13 family. GlgB subfamily. Monomer.

It carries out the reaction Transfers a segment of a (1-&gt;4)-alpha-D-glucan chain to a primary hydroxy group in a similar glucan chain.. It functions in the pathway glycan biosynthesis; glycogen biosynthesis. Catalyzes the formation of the alpha-1,6-glucosidic linkages in glycogen by scission of a 1,4-alpha-linked oligosaccharide from growing alpha-1,4-glucan chains and the subsequent attachment of the oligosaccharide to the alpha-1,6 position. This is 1,4-alpha-glucan branching enzyme GlgB from Oleidesulfovibrio alaskensis (strain ATCC BAA-1058 / DSM 17464 / G20) (Desulfovibrio alaskensis).